The sequence spans 141 residues: uncharacterized protein (141 aa).

This is an uncharacterized protein from Listeria innocua serovar 6a (strain ATCC BAA-680 / CLIP 11262).